A 48-amino-acid chain; its full sequence is Toxin CSTX-14 (48 aa).

Disulfide bonds link Cys3-Cys18, Cys10-Cys27, Cys17-Cys42, and Cys29-Cys40.

The protein belongs to the neurotoxin 19 (CSTX) family. 12 subfamily. As to quaternary structure, heterodimer of A and B chains; disulfide-linked. Post-translationally, contains 4 disulfide bonds. Expressed by the venom gland.

It is found in the secreted. The polypeptide is Toxin CSTX-14 (Cupiennius salei (American wandering spider)).